Consider the following 673-residue polypeptide: Putative K(+)-stimulated pyrophosphate-energized sodium pump (673 aa).

A run of 5 helical transmembrane segments spans residues 3–23 (SFIV…FMLS), 62–82 (IVIV…ACFI), 84–104 (GAIF…KANV), 127–147 (VMGM…YYIF), and 154–174 (VTGF…GGGI). Lys-177 serves as a coordination point for substrate. Asp-180, Asp-184, Asn-207, and Asp-210 together coordinate Mg(2+). A run of 6 helical transmembrane segments spans residues 222–242 (LFES…VVYA), 247–267 (VMFP…GILF), 279–299 (ALNT…AILS), 302–322 (IFGN…GMII), 364–384 (LWPI…MGGG), and 387–407 (AMVG…TTGL). Position 419 (Asp-419) interacts with Mg(2+). 4 helical membrane-spanning segments follow: residues 449–469 (AAIG…SLFA), 486–506 (VTLV…ALTM), 553–573 (EMIL…LLLG), and 576–596 (ALGG…ILMS). The Ca(2+) site is built by Asp-603, Asp-629, and Asp-633. Position 636 (Lys-636) interacts with substrate. The helical transmembrane segment at 652 to 672 (IVSLVFAPVVLQYGGILLNLI) threads the bilayer.

This sequence belongs to the H(+)-translocating pyrophosphatase (TC 3.A.10) family. K(+)-stimulated subfamily. Homodimer. It depends on Mg(2+) as a cofactor.

It is found in the cell membrane. The catalysed reaction is Na(+)(in) + diphosphate + H2O = Na(+)(out) + 2 phosphate + H(+). With respect to regulation, requires K(+) for maximal activity. Sodium pump that utilizes the energy of pyrophosphate hydrolysis as the driving force for Na(+) movement across the membrane. The polypeptide is Putative K(+)-stimulated pyrophosphate-energized sodium pump (Clostridium tetani (strain Massachusetts / E88)).